A 160-amino-acid polypeptide reads, in one-letter code: 6,7-dimethyl-8-ribityllumazine synthase (160 aa).

5-amino-6-(D-ribitylamino)uracil is bound by residues Phe23, Ser61–Glu63, and Ala85–Ile87. Residue Asp90–Thr91 participates in (2S)-2-hydroxy-3-oxobutyl phosphate binding. His93 (proton donor) is an active-site residue. Phe118 serves as a coordination point for 5-amino-6-(D-ribitylamino)uracil. Residue Arg132 participates in (2S)-2-hydroxy-3-oxobutyl phosphate binding.

The protein belongs to the DMRL synthase family.

It carries out the reaction (2S)-2-hydroxy-3-oxobutyl phosphate + 5-amino-6-(D-ribitylamino)uracil = 6,7-dimethyl-8-(1-D-ribityl)lumazine + phosphate + 2 H2O + H(+). It functions in the pathway cofactor biosynthesis; riboflavin biosynthesis; riboflavin from 2-hydroxy-3-oxobutyl phosphate and 5-amino-6-(D-ribitylamino)uracil: step 1/2. Catalyzes the formation of 6,7-dimethyl-8-ribityllumazine by condensation of 5-amino-6-(D-ribitylamino)uracil with 3,4-dihydroxy-2-butanone 4-phosphate. This is the penultimate step in the biosynthesis of riboflavin. The chain is 6,7-dimethyl-8-ribityllumazine synthase from Parasynechococcus marenigrum (strain WH8102).